Reading from the N-terminus, the 275-residue chain is Intercellular adhesion molecule 2 (275 aa).

The signal sequence occupies residues 1-24 (MSSFGYRTLTVALFALICCPGSDE). Residues 25–223 (KVFEVHVRPK…EIYEPVSDSQ (199 aa)) lie on the Extracellular side of the membrane. Residues 41–98 (KASLEVNCSTTCNQPEVGGLETSLDKILLDEQAQWKHYLVSNISHDTVLQCHFTCSGK) form the Ig-like C2-type 1 domain. Residues N47, N82, N105, N153, N158, N176, and N187 are each glycosylated (N-linked (GlcNAc...) asparagine). 2 cysteine pairs are disulfide-bonded: C48–C91 and C52–C95. The 71-residue stretch at 127–197 (GKSFTIECRV…FSCLAVLDLI (71 aa)) folds into the Ig-like C2-type 2 domain. C134 and C190 are oxidised to a cystine. Residues 224 to 248 (MVIIVTVVSVLLSLFVTSVLLCFIF) form a helical membrane-spanning segment. Residues 249–275 (GQHLRQQRMGTYGVRAAWRRLPQAFRP) are Cytoplasmic-facing. Residues 251–275 (HLRQQRMGTYGVRAAWRRLPQAFRP) are required for interaction with EZR, MSN and RDX and co-localization to microvilli.

Belongs to the immunoglobulin superfamily. ICAM family. In terms of assembly, interacts with RDX, EZR and MSN.

It localises to the membrane. The protein localises to the cell projection. The protein resides in the microvillus. ICAM proteins are ligands for the leukocyte adhesion protein LFA-1 (integrin alpha-L/beta-2). ICAM2 may play a role in lymphocyte recirculation by blocking LFA-1-dependent cell adhesion. It mediates adhesive interactions important for antigen-specific immune response, NK-cell mediated clearance, lymphocyte recirculation, and other cellular interactions important for immune response and surveillance. The sequence is that of Intercellular adhesion molecule 2 (ICAM2) from Gorilla gorilla gorilla (Western lowland gorilla).